The following is a 256-amino-acid chain: NAP1-related protein 1 (256 aa).

Residues 23–64 (IDAELVLSIEKLQEIQDDLEKINEKASDEVLEVEQKYNVIRK) adopt a coiled-coil conformation. Residues 220–256 (LTYFNNDADEEDFDGDDDGDEEGEEDDDDEEEEDGEE) are disordered. Acidic residues predominate over residues 226–256 (DADEEDFDGDDDGDEEGEEDDDDEEEEDGEE).

This sequence belongs to the nucleosome assembly protein (NAP) family. In terms of assembly, can form homomeric and heteromeric protein complexes with NRP2. Binds histones H2A and H2B and associates with chromatin in vivo. In terms of tissue distribution, ubiquitous.

The protein localises to the cytoplasm. The protein resides in the nucleus. Acts as a histone H2A/H2B chaperone in nucleosome assembly, playing a critical role for the correct expression of genes involved in root proliferation and patterning. Required with NRP2 for the maintenance of cell proliferation and differentiation in postembryonic root growth. Involved in both intramolecular and intermolecular somatic homologous recombination. The protein is NAP1-related protein 1 (NRP1) of Arabidopsis thaliana (Mouse-ear cress).